The primary structure comprises 190 residues: Protein hunchback (190 aa).

3 disordered regions span residues 13–59 (EPMS…SSNL), 86–110 (AAMT…PNPM), and 142–190 (QTND…KYMA). The span at 17–31 (HHHHHSHHHGHHHML) shows a compositional bias: basic residues. Polar residues predominate over residues 90–100 (PSPSNNDQNSP). The segment covering 171 to 190 (EPEKDHDLISNSSEDMKYMA) has biased composition (basic and acidic residues).

It belongs to the hunchback C2H2-type zinc-finger protein family.

It is found in the nucleus. Its function is as follows. Gap class segmentation protein that controls development of head structures. The sequence is that of Protein hunchback (hb) from Scaptomyza crassifemur (Fruit fly).